We begin with the raw amino-acid sequence, 1279 residues long: MSSTKWTDEQRQAVFTKNCNLLVAAGAGAGKTAVLVQRIIEKILDKEEPIDIDKLLVVTFTNAAAAEMRERIGDAISKGLDENPESKALRKQLTLLNKSNIMTIHSFCLQIIKNNFHTIEIDPNFRICDETEGILMKQEAMDELFDELYEIENKDFINLVESYASRKDTRLQEVVLELHRFAKSAPFPYDWLLNMAEEFNVGEEFNFEETLWADMIMEDMKVLLHGFKNMLQQSIDVILNSEGIDYYYEPFKMDLNFINSLLEKSSFKEFRGEIIAYDFPKLPLKRNKDADKEAKERVKKLRDRVKKKILEIKNILNSYENEFIKKEFIFLYPSMKALSNLVILFDKKYEAKKRERDLIDFNDIEHLCLSILTDKDSEDHIIPSDTALDYRKKFTEVLIDEYQDSNLVQEVIMSMVSRVKGYWSFYNGQLMFNEEEINLEEPHIGLDIPNRFMVGDVKQSIYRFRQAKPEIFLDKYNEYSEEESIKNRKVKLFKNFRSREEVINGVNYLFKQIMSKTIGELDYTEEEALKVGASYGEEVKGEPIELCLMDKKYEISEEVLKEYNMDEEEALDNIQLEGRLVAKKIQKLVGNNLEGGLKVFDKKLGEYRNLQYRDIVILMRATSNWAPVFVEELAKEGIPVFADTNSGYFNTTEIKTIISLLQIIDNPLQDIPLLSVLRSPIASFTDDELIDIRMVNKNIAFYECMEIIYKLYKDEELDSYYSFYMEDEDKTNKIVKDIKEELKNKICSFIEKLNLWRKKSIHIDIDEFIWFLYVETGYYGYVGALPAGEQRQANLRILFQRAKQYEKTSYKGLFNFINFINKLKFSSGDMGSAKILGENENVVRIMSIHKSKGLEFPVVILSGTGKNFNMMDLNKNILFHRDLGYGPDYVDTERRIAYPSLVKNIIKNKIRLETLSEEMRILYVALTRAREKLIITGLINNMDKTVEDWLNLSDDKNKVPEYAVMSGKTYLDWIGPALIKHKDAVSLREELKITSGLSNIVDDKSKWKIELWNKKELLKEKVEENEVEISEKIKETLMNLGESNYKEEIYKKLSFKYKYDNASSIPTKLSVSDVKKQFILDEKENTEELFKKVELRKPMFMGEEKKISPSERGTIIHLFMQHLDLKKAENEEDIKEQINRLIEREFITYEQSKIINPYKILKFCRSELGKRMINSNNINREMPFSIEVPAVEIYRELDKDIYKDEKLIIQGIIDCYFEEEEGLVLLDYKTDYVNDIEEIKNRYEIQIKYYEEALNRITGKNVKDKYLYLFSVDNYIKID.

The UvrD-like helicase ATP-binding domain maps to 4 to 499 (TKWTDEQRQA…VKLFKNFRSR (496 aa)). Residue 25-32 (AGAGAGKT) participates in ATP binding. The UvrD-like helicase C-terminal domain occupies 526-853 (EEALKVGASY…RIMSIHKSKG (328 aa)).

Belongs to the helicase family. AddA subfamily. As to quaternary structure, heterodimer of AddA and AddB/RexB. Requires Mg(2+) as cofactor.

The enzyme catalyses Couples ATP hydrolysis with the unwinding of duplex DNA by translocating in the 3'-5' direction.. The catalysed reaction is ATP + H2O = ADP + phosphate + H(+). Functionally, the heterodimer acts as both an ATP-dependent DNA helicase and an ATP-dependent, dual-direction single-stranded exonuclease. Recognizes the chi site generating a DNA molecule suitable for the initiation of homologous recombination. The AddA nuclease domain is required for chi fragment generation; this subunit has the helicase and 3' -&gt; 5' nuclease activities. The protein is ATP-dependent helicase/nuclease subunit A of Clostridium botulinum (strain Loch Maree / Type A3).